The following is a 2564-amino-acid chain: Spectrin beta chain, non-erythrocytic 4 (2564 aa).

The disordered stretch occupies residues Met-1 to Pro-37. An actin-binding region spans residues Met-1 to His-282. Residues Glu-26 to Gln-36 show a composition bias toward basic and acidic residues. Calponin-homology (CH) domains are found at residues Ala-61–Gln-165 and Arg-180–Ser-285. Spectrin repeat units lie at residues Ile-311–Arg-418, Leu-430–Gln-533, Ala-536–Glu-641, Ala-774–Asp-879, Tyr-884–Glu-982, Arg-1089–Val-1196, Glu-1306–Phe-1407, Ala-1412–Leu-1512, Lys-1515–Leu-1617, Val-1623–Gln-1725, Trp-1728–Leu-1830, Glu-1835–Arg-1935, Ala-1944–Gln-2046, and Glu-2049–Gln-2123. The segment at Lys-1853–Ser-1872 is disordered. Residues Pro-2208 to Glu-2225 are compositionally biased toward low complexity. Disordered stretches follow at residues Pro-2208–Asn-2439 and Ala-2533–Lys-2564. Basic and acidic residues-rich tracts occupy residues Val-2227–Ser-2254, Glu-2268–Ala-2278, and Glu-2287–Lys-2318. A compositionally biased stretch (pro residues) spans Pro-2343–Arg-2355. Composition is skewed to basic and acidic residues over residues Leu-2362–Arg-2377 and Phe-2424–Arg-2435. The 110-residue stretch at Thr-2418–Ala-2527 folds into the PH domain. Residues Thr-2538 to Glu-2547 show a composition bias toward polar residues. Basic and acidic residues predominate over residues Gly-2548–Lys-2564.

This sequence belongs to the spectrin family. Expressed in skeletal muscle at the sarcolemma and in the muscle capillaries (at protein level). Abundantly expressed in brain and pancreatic islets.

It is found in the cytoplasm. It localises to the cytoskeleton. The protein localises to the cell cortex. This is Spectrin beta chain, non-erythrocytic 4 (SPTBN4) from Homo sapiens (Human).